We begin with the raw amino-acid sequence, 318 residues long: tRNA U34 carboxymethyltransferase (318 aa).

Carboxy-S-adenosyl-L-methionine is bound by residues Lys88, Trp102, Lys107, Gly126, Leu176 to Glu177, Met192, Tyr196, and Arg311.

Belongs to the class I-like SAM-binding methyltransferase superfamily. CmoB family. In terms of assembly, homotetramer.

It carries out the reaction carboxy-S-adenosyl-L-methionine + 5-hydroxyuridine(34) in tRNA = 5-carboxymethoxyuridine(34) in tRNA + S-adenosyl-L-homocysteine + H(+). Functionally, catalyzes carboxymethyl transfer from carboxy-S-adenosyl-L-methionine (Cx-SAM) to 5-hydroxyuridine (ho5U) to form 5-carboxymethoxyuridine (cmo5U) at position 34 in tRNAs. This chain is tRNA U34 carboxymethyltransferase, found in Pseudomonas putida (strain GB-1).